The primary structure comprises 509 residues: Lysine--tRNA ligase (509 aa).

E395 and E402 together coordinate Mg(2+).

It belongs to the class-II aminoacyl-tRNA synthetase family. As to quaternary structure, homodimer. Mg(2+) serves as cofactor.

It is found in the cytoplasm. The catalysed reaction is tRNA(Lys) + L-lysine + ATP = L-lysyl-tRNA(Lys) + AMP + diphosphate. The chain is Lysine--tRNA ligase from Fervidobacterium nodosum (strain ATCC 35602 / DSM 5306 / Rt17-B1).